The following is a 522-amino-acid chain: Nitrogen fixation protein VnfA (522 aa).

The tract at residues 22–183 (LLYEMSQIAT…AQAVELYLVE (162 aa)) is a domain. Residues 35–177 (DLSSIISILL…ILATTTAQAV (143 aa)) enclose the GAF domain. The region spanning 210–439 (IIGNSKPMLE…LENVIERAML (230 aa)) is the Sigma-54 factor interaction domain. ATP is bound by residues 238 to 245 (GESGVGKE) and 301 to 310 (AAGGTIFLDE). Residues 493 to 512 (MTEAATHLGLTARVLGLRMG) constitute a DNA-binding region (H-T-H motif).

In terms of biological role, required for the expression of the V-dependent nitrogen fixation system in Azotobacter vinelandii. It is required for the regulation of nitrogenase 2 transcription. Interacts with sigma-54. The protein is Nitrogen fixation protein VnfA (vnfA) of Azotobacter vinelandii.